Here is a 161-residue protein sequence, read N- to C-terminus: Large ribosomal subunit protein bL9 (161 aa).

It belongs to the bacterial ribosomal protein bL9 family.

In terms of biological role, binds to the 23S rRNA. The chain is Large ribosomal subunit protein bL9 from Protochlamydia amoebophila (strain UWE25).